The chain runs to 358 residues: F-box only protein 25 (358 aa).

Residues 1-83 (MPFLGQDWRS…NDTNTQSFYR (83 aa)) are interaction with beta-actin. The 49-residue stretch at 226–274 (LTLSDLPLHMLNNILYRFSDGWDIITLGQVTPTLYMLSEDRQLWKKLCQ) folds into the F-box domain.

As to quaternary structure, part of a SCF (SKP1-cullin-F-box) protein ligase complex consisting of FBXO25, SKP1, CUL1 and RBX1. Interacts directly with SKP1 and CUL1. Interacts (via C-terminus) with beta-actin (via N-terminus).

It is found in the nucleus. It participates in protein modification; protein ubiquitination. Functionally, substrate-recognition component of the SCF (SKP1-CUL1-F-box protein)-type E3 ubiquitin ligase complex. May play a role in accumulation of expanded polyglutamine (polyQ) protein huntingtin (HTT). This is F-box only protein 25 (FBXO25) from Macaca fascicularis (Crab-eating macaque).